Consider the following 310-residue polypeptide: MKKALVIRFLAGIYYIQDLDNQTILKAQKKGVLKKSNFIQDNQLKNNRDKMSIKVGDIVLYGMCYDKYLIYAILPRKNELKRPNIANIDQVLLVFSLVKPHFQTLLLDKFLLILQQHKLDVILVFSKIDLIEKEELEEIQQNMNYYFPFYTCYYVDSKQQIGIGVLKNIFEQKITVLAGQTGVGKSTLLKALIPDANLKTQEISESLGRGKHTTKNAQLYLFNNGFIADTPGFSKLDLGGFSYQNLKNFYPDFLKYVDNCYFGTNCLHLQETQCGVKEALTQGKIIPSRYSNYCYFMEEIKKEKKIYVKN.

The CP-type G domain occupies 77–236; sequence KNELKRPNIA…IADTPGFSKL (160 aa). GTP-binding positions include 126–129 and 179–187; these read SKID and GQTGVGKST. Positions 260, 266, 268, and 274 each coordinate Zn(2+).

It belongs to the TRAFAC class YlqF/YawG GTPase family. RsgA subfamily. In terms of assembly, monomer. Associates with 30S ribosomal subunit, binds 16S rRNA. The cofactor is Zn(2+).

The protein localises to the cytoplasm. Its function is as follows. One of several proteins that assist in the late maturation steps of the functional core of the 30S ribosomal subunit. Helps release RbfA from mature subunits. May play a role in the assembly of ribosomal proteins into the subunit. Circularly permuted GTPase that catalyzes slow GTP hydrolysis, GTPase activity is stimulated by the 30S ribosomal subunit. This chain is Small ribosomal subunit biogenesis GTPase RsgA, found in Phytoplasma australiense.